A 260-amino-acid chain; its full sequence is MARLAAFDMDGTLLMPDHHLGEKTLSTLARLRERDITLTFATGRHALEMQHILGALSLDAYLITGNGTRVHSLEGELLHRDDLPADVAELVLYQQWDTRASMHIFNDDGWFTGKEIPALLQAFVYSGFRYQIIDVKKMPLGSVTKICFCGDHDDLTRLQIQLYEALGERAHLCFSATDCLEVLPVGCNKGAALTVLTQHLGLSLRDCMAFGDAMNDREMLGSVGSGFIMGNAMPQLRAELPHLPVIGHCRNQAVSHYLTH.

Aspartate 8 (nucleophile) is an active-site residue. Aspartate 8, aspartate 10, and aspartate 212 together coordinate Mg(2+).

This sequence belongs to the HAD-like hydrolase superfamily. Cof family. Requires Mg(2+) as cofactor.

The enzyme catalyses 4-amino-2-methyl-5-(diphosphooxymethyl)pyrimidine + H2O = 4-amino-2-methyl-5-(phosphooxymethyl)pyrimidine + phosphate + H(+). Its function is as follows. Catalyzes the hydrolysis of 4-amino-2-methyl-5-hydroxymethylpyrimidine pyrophosphate (HMP-PP) to 4-amino-2-methyl-5-hydroxymethylpyrimidine phosphate (HMP-P). This Shigella boydii serotype 4 (strain Sb227) protein is HMP-PP phosphatase.